Reading from the N-terminus, the 1030-residue chain is Peroxisomal ATPase PEX6 (1030 aa).

Residues 478–683 (VLLHSTTNNV…VETARMTATA (206 aa)) are AAA-cassette D1. The segment at 767 to 956 (GILFYGPPGT…CSDAMLNAMS (190 aa)) is AAA-cassette D2. 772-779 (GPPGTGKT) contributes to the ATP binding site.

It belongs to the AAA ATPase family. In terms of assembly, interacts with PEX1; forming the PEX1-PEX6 AAA ATPase complex, which is composed of a heterohexamer formed by a trimer of PEX1-PEX6 dimers. Interacts with PEX15; anchors PEX1-PEX6 heterooligomers to the peroxisomal membrane and mediates their association with the peroxisomal importomer. Interacts with UBP15.

Its subcellular location is the cytoplasm. It is found in the cytosol. The protein resides in the peroxisome membrane. It catalyses the reaction ATP + H2O = ADP + phosphate + H(+). Functionally, component of the PEX1-PEX6 AAA ATPase complex, a protein dislocase complex that mediates the ATP-dependent extraction of the PEX5 receptor from peroxisomal membranes, an essential step for PEX5 recycling. Specifically recognizes PEX5 monoubiquitinated at 'Cys-6', and pulls it out of the peroxisome lumen through the PEX2-PEX10-PEX12 retrotranslocation channel. Extraction by the PEX1-PEX6 AAA ATPase complex is accompanied by unfolding of the TPR repeats and release of bound cargo from PEX5. The protein is Peroxisomal ATPase PEX6 of Saccharomyces cerevisiae (strain ATCC 204508 / S288c) (Baker's yeast).